We begin with the raw amino-acid sequence, 210 residues long: Thymidylate kinase (210 aa).

10–17 (GPEGAGKS) contributes to the ATP binding site.

It belongs to the thymidylate kinase family.

The catalysed reaction is dTMP + ATP = dTDP + ADP. Phosphorylation of dTMP to form dTDP in both de novo and salvage pathways of dTTP synthesis. This chain is Thymidylate kinase, found in Pseudomonas aeruginosa (strain LESB58).